Reading from the N-terminus, the 481-residue chain is Phosphoglucosamine mutase (481 aa).

Ser128 serves as the catalytic Phosphoserine intermediate. Ser128, Asp269, Asp271, and Asp273 together coordinate Mg(2+). Ser128 is modified (phosphoserine).

It belongs to the phosphohexose mutase family. It depends on Mg(2+) as a cofactor. Post-translationally, activated by phosphorylation.

It catalyses the reaction alpha-D-glucosamine 1-phosphate = D-glucosamine 6-phosphate. Functionally, catalyzes the conversion of glucosamine-6-phosphate to glucosamine-1-phosphate. The sequence is that of Phosphoglucosamine mutase from Synechocystis sp. (strain ATCC 27184 / PCC 6803 / Kazusa).